The primary structure comprises 494 residues: Integrin beta-like protein 1 (494 aa).

The signal sequence occupies residues 1 to 23 (MHPPGFKNFLLLVSSLFFIGLSA). Disulfide bonds link C40-C71, C51-C69, C63-C74, C76-C89, C91-C112, C96-C110, C104-C115, C117-C126, C132-C159, C143-C157, C151-C162, C164-C178, C180-C202, C185-C200, C194-C205, C207-C216, C220-C247, C231-C245, C239-C250, C252-C269, C271-C296, C276-C294, C288-C299, C301-C310, C316-C343, C327-C341, C335-C346, C348-C361, C363-C384, C368-C382, C376-C387, C389-C398, C404-C431, C415-C429, C423-C434, C436-C448, C450-C471, C455-C469, C463-C474, and C476-C485. I-EGF domains are found at residues 40 to 90 (CRLS…PLCE), 91 to 127 (CHDWVCETYDGKTCAGHGTCDCGKCKCDVGWSGEACQ), 132 to 179 (CDLT…KFCE), 180 to 217 (CDDRECIDDETEEICGGHGKCYCGNCYCEAGWHGDKCE), 220 to 270 (CDIT…DTCE), 271 to 311 (CDER…KKCE), 316 to 362 (CPLS…KTCE), 363 to 399 (CDDRRCEDLDGVVCGGRGTCSCGRCVCEKGWFGKLCQ), 404 to 449 (CNMT…EFCD), and 450 to 486 (CDDRDCDKHDGLICTGNGICSCGNCECWDGWNGNACE). The stretch at 51 to 95 (CRAPGQPPGSALCHDRGRCECGVCICHVTEPGTYFGPLCECHDWV) is one I repeat. The cysteine-rich tandem repeats stretch occupies residues 51-494 (CRAPGQPPGS…CEIWLGTEYP (444 aa)). The stretch at 96 to 142 (CETYDGKTCAGHGTCDCGKCKCDVGWSGEACQYPTKCDLTKKISNQM) is one II repeat. One copy of the III repeat lies at 143–184 (CKNSQDVICSNAGTCHCGRCKCDNSDGHGLIYGKFCECDDRE). The IV repeat unit spans residues 185-230 (CIDDETEEICGGHGKCYCGNCYCEAGWHGDKCEFQCDITPWESKRR). The V repeat unit spans residues 231–275 (CTSPDGKVCSNRGTCVCGECSCHDVDPTGDWGDIHGDTCECDERD). The stretch at 276 to 326 (CRAVYDRYSDDFCSGHGQCNCGRCDCRAGWYGKKCEHPKNCPLSAEESTRK) is one VI repeat. One copy of the VII repeat lies at 327 to 367 (CQGSSDLPCSGRGRCECGRCTCYPPGDSRVYGKTCECDDRR). The VIII repeat unit spans residues 368 to 414 (CEDLDGVVCGGRGTCSCGRCVCEKGWFGKLCQHPRKCNMTEEQSRSL). N405 carries N-linked (GlcNAc...) asparagine glycosylation. The stretch at 415–454 (CESADGTLCSGKGSCHCGKCICSGEEWYISGEFCDCDDRD) is one IX repeat. The X repeat unit spans residues 455-494 (CDKHDGLICTGNGICSCGNCECWDGWNGNACEIWLGTEYP).

Its subcellular location is the secreted. The polypeptide is Integrin beta-like protein 1 (Itgbl1) (Rattus norvegicus (Rat)).